The sequence spans 156 residues: Transcriptional repressor NrdR (156 aa).

Residues 3–34 (CPYCRHPDSRVVDSREAEEGAAIRRRRSCPNC) fold into a zinc finger. The ATP-cone domain maps to 46–136 (LSVVKRSGVT…VYRSFTSAED (91 aa)).

This sequence belongs to the NrdR family. Zn(2+) is required as a cofactor.

Negatively regulates transcription of bacterial ribonucleotide reductase nrd genes and operons by binding to NrdR-boxes. This chain is Transcriptional repressor NrdR, found in Nocardia farcinica (strain IFM 10152).